A 223-amino-acid chain; its full sequence is Chorismate dehydratase (223 aa).

This sequence belongs to the MqnA/MqnD family. MqnA subfamily.

The enzyme catalyses chorismate = 3-[(1-carboxyvinyl)-oxy]benzoate + H2O. The protein operates within quinol/quinone metabolism; menaquinone biosynthesis. In terms of biological role, catalyzes the dehydration of chorismate into 3-[(1-carboxyvinyl)oxy]benzoate, a step in the biosynthesis of menaquinone (MK, vitamin K2). In Campylobacter jejuni subsp. jejuni serotype O:23/36 (strain 81-176), this protein is Chorismate dehydratase.